A 141-amino-acid chain; its full sequence is Hemoglobin subunit alpha (141 aa).

Positions 1-141 (VLSAADKSNV…VSTVLTSKYR (141 aa)) constitute a Globin domain. Ser-3 carries the post-translational modification Phosphoserine. An N6-succinyllysine mark is found at Lys-7 and Lys-11. Lys-16 bears the N6-acetyllysine; alternate mark. At Lys-16 the chain carries N6-succinyllysine; alternate. Tyr-24 is subject to Phosphotyrosine. At Ser-35 the chain carries Phosphoserine. Lys-40 is modified (N6-succinyllysine). Residue Ser-49 is modified to Phosphoserine. Residue His-58 participates in O2 binding. Residue His-87 participates in heme b binding. Ser-102 carries the phosphoserine modification. Thr-108 is subject to Phosphothreonine. A Phosphoserine modification is found at Ser-124. Residues Thr-134 and Thr-137 each carry the phosphothreonine modification. Phosphoserine is present on Ser-138.

It belongs to the globin family. Heterotetramer of two alpha chains and two beta chains. As to expression, red blood cells.

Involved in oxygen transport from the lung to the various peripheral tissues. Its function is as follows. Hemopressin acts as an antagonist peptide of the cannabinoid receptor CNR1. Hemopressin-binding efficiently blocks cannabinoid receptor CNR1 and subsequent signaling. The protein is Hemoglobin subunit alpha (HBA) of Rangifer tarandus (Reindeer).